Here is a 1270-residue protein sequence, read N- to C-terminus: Activating transcription factor 7-interacting protein 1 (1270 aa).

Met-1 is modified (N-acetylmethionine). Lys-33 participates in a covalent cross-link: Glycyl lysine isopeptide (Lys-Gly) (interchain with G-Cter in SUMO2). 2 positions are modified to phosphoserine: Ser-57 and Ser-113. Disordered stretches follow at residues Asp-104–Asp-223 and Thr-235–Thr-402. Thr-118 is modified (phosphothreonine). 2 stretches are compositionally biased toward low complexity: residues Gly-132–Asp-203 and Asp-248–Leu-269. 2 stretches are compositionally biased toward basic and acidic residues: residues Ser-310–Glu-327 and Asp-333–Asn-343. Residues Ala-347–Asp-356 are compositionally biased toward acidic residues. Residues Arg-363–Glu-373 show a composition bias toward basic and acidic residues. 6 positions are modified to phosphoserine: Ser-445, Ser-473, Ser-474, Ser-477, Ser-479, and Ser-496. 4 disordered regions span residues Thr-455–Arg-570, Glu-658–Asn-685, Pro-822–Ser-862, and Arg-886–Pro-906. Residues Ser-474–Ser-486 are compositionally biased toward polar residues. The span at Ser-496–Glu-509 shows a compositional bias: acidic residues. Residues Ser-524–Ser-552 show a composition bias toward basic and acidic residues. Residues Arg-553–Arg-571 carry the Nuclear localization signal motif. A Glycyl lysine isopeptide (Lys-Gly) (interchain with G-Cter in SUMO2) cross-link involves residue Lys-558. Phosphoserine is present on Ser-559. The tract at residues Met-562 to Ile-817 is interaction with SETDB1. Positions Lys-617–Glu-665 form a coiled coil. Position 673 is a phosphoserine (Ser-673). A compositionally biased stretch (polar residues) spans Pro-822–Ser-834. Positions Lys-843–Ser-854 are enriched in low complexity. Ser-899 carries the post-translational modification Phosphoserine. Glycyl lysine isopeptide (Lys-Gly) (interchain with G-Cter in SUMO2) cross-links involve residues Lys-910 and Lys-938. Polar residues-rich tracts occupy residues Thr-918 to Ala-942 and Asp-950 to Ser-964. Disordered regions lie at residues Thr-918 to Thr-1026 and Ser-1115 to Leu-1160. Residues Gly-965 to Glu-975 are interaction with SUMO. Polar residues-rich tracts occupy residues Thr-988 to Val-999 and Gly-1016 to Thr-1026. Over residues Pro-1134–Leu-1151 the composition is skewed to pro residues. The interval Glu-1154–Ser-1270 is interaction with MBD1. Residues Leu-1160–Ser-1270 enclose the Fibronectin type-III domain.

This sequence belongs to the MCAF family. In terms of assembly, interacts with MBD1; the interaction is enhanced when MBD1 is sumoylated. Interacts with SETDB1; the interaction protects SETDB1 from proteasomal degradation and is required to stimulate histone methyltransferase activity and facilitate the conversion of dimethylated to trimethylated H3 'Lys-9'. Interacts with SUMO ubiquitin-like proteins (SUMO1, SUNO2 and SUMO3), with a preference for SUMO2 and SUMO3. Interacts with SP1, ATF7 and ZHX1. Interacts with the general transcription machinery, including ERCC2, ERCC3, GTF2E1, GTF2E2 and POLR2A. As to quaternary structure, (Microbial infection) Interacts with Epstein-Barr virus BRLF1/Rta protein, leading to the regulation of host genes in Epstein-Barr virus-infected cells. In terms of tissue distribution, detected at low levels in breast, lung and stomach; highly up-regulated in the corresponding cancerous tissues (at protein level).

The protein resides in the nucleus. Its function is as follows. Recruiter that couples transcriptional factors to general transcription apparatus and thereby modulates transcription regulation and chromatin formation. Can both act as an activator or a repressor depending on the context. Required for HUSH-mediated heterochromatin formation and gene silencing. Mediates MBD1-dependent transcriptional repression, probably by recruiting complexes containing SETDB1. Stabilizes SETDB1, is required to stimulate histone methyltransferase activity of SETDB1 and facilitates the conversion of dimethylated to trimethylated H3 'Lys-9' (H3K9me3). The complex formed with MBD1 and SETDB1 represses transcription and couples DNA methylation and histone H3 'Lys-9' trimethylation (H3K9me3). Facilitates telomerase TERT and TERC gene expression by SP1 in cancer cells. The chain is Activating transcription factor 7-interacting protein 1 from Homo sapiens (Human).